Here is a 214-residue protein sequence, read N- to C-terminus: Redox-sensing transcriptional repressor Rex (214 aa).

The H-T-H motif DNA-binding region spans 17–56 (KYHRYLEELLKSDVDRISSKELSEKIGFTASQIRQDLNCF). 91–96 (GAGNIG) contacts NAD(+).

Belongs to the transcriptional regulatory Rex family. As to quaternary structure, homodimer.

It is found in the cytoplasm. Its function is as follows. Modulates transcription in response to changes in cellular NADH/NAD(+) redox state. The sequence is that of Redox-sensing transcriptional repressor Rex from Clostridium acetobutylicum (strain ATCC 824 / DSM 792 / JCM 1419 / IAM 19013 / LMG 5710 / NBRC 13948 / NRRL B-527 / VKM B-1787 / 2291 / W).